Consider the following 336-residue polypeptide: MTLRIGVIGTGAIGRDHMRRINQTLSGAKVTAVSDVNIESVRTARADLAPEAEVVGSGEEVAASAGVDAVVVTSWGATHEQYVLAAIAAGKPVFCEKPLSTTAAGAGRIVEAETAFGRRLVQVGFMRRYDAGYRMLKAVVENEIGRPLMVHAAHRNPSVPEQYITPMAIQDTLIHEIDVLRWLLDDDYVSAQVISPRRTRHAHARVEDPQIVLLETKSGIRIDVEIFVNCRYGYDIQCQVVGEEGLASLPDPMAVVMRKDAKLQSAIMTDWKDRFIDSYDLELQDFIKAAARGTASGPTAWDGYVAAVSSDACVEAQSRPGSIVPISLPARPPLYN.

Belongs to the Gfo/Idh/MocA family. As to quaternary structure, homotetramer.

The enzyme catalyses myo-inositol + NAD(+) = scyllo-inosose + NADH + H(+). Its function is as follows. Involved in the oxidation of myo-inositol (MI) to 2-keto-myo-inositol (2KMI or 2-inosose). This Acidiphilium cryptum (strain JF-5) protein is Inositol 2-dehydrogenase.